The following is a 362-amino-acid chain: Probable aromatic amino acid hydroxylase (362 aa).

Residues His200 and His205 each coordinate Fe cation.

The protein belongs to the biopterin-dependent aromatic amino acid hydroxylase family. Fe(2+) serves as cofactor.

The sequence is that of Probable aromatic amino acid hydroxylase from Chlamydia pneumoniae (Chlamydophila pneumoniae).